A 178-amino-acid polypeptide reads, in one-letter code: uncharacterized protein (178 aa).

Functionally, this protein is non-essential for virus function. This is an uncharacterized protein from Sulfolobus spindle-shape virus 1 (SSV1).